Consider the following 103-residue polypeptide: Small ribosomal subunit protein uS10 (103 aa).

This sequence belongs to the universal ribosomal protein uS10 family. As to quaternary structure, part of the 30S ribosomal subunit.

Functionally, involved in the binding of tRNA to the ribosomes. The sequence is that of Small ribosomal subunit protein uS10 from Baumannia cicadellinicola subsp. Homalodisca coagulata.